The chain runs to 234 residues: Orotate phosphoribosyltransferase (234 aa).

Position 37 (K37) interacts with 5-phospho-alpha-D-ribose 1-diphosphate. 45-46 (FF) lines the orotate pocket. 5-phospho-alpha-D-ribose 1-diphosphate is bound by residues 83 to 84 (YK), R109, K110, K113, H115, and 134 to 142 (DDVISAGTS). The orotate site is built by S138 and R166.

Belongs to the purine/pyrimidine phosphoribosyltransferase family. PyrE subfamily. In terms of assembly, homodimer. The cofactor is Mg(2+).

It catalyses the reaction orotidine 5'-phosphate + diphosphate = orotate + 5-phospho-alpha-D-ribose 1-diphosphate. The protein operates within pyrimidine metabolism; UMP biosynthesis via de novo pathway; UMP from orotate: step 1/2. Its function is as follows. Catalyzes the transfer of a ribosyl phosphate group from 5-phosphoribose 1-diphosphate to orotate, leading to the formation of orotidine monophosphate (OMP). The protein is Orotate phosphoribosyltransferase of Methylibium petroleiphilum (strain ATCC BAA-1232 / LMG 22953 / PM1).